The primary structure comprises 101 residues: Putative regulatory protein PrgT (101 aa).

Functionally, might be involved in the expression of prgA, but is not required for activation of the expression of prgB. The chain is Putative regulatory protein PrgT (prgT) from Enterococcus faecalis (strain ATCC 47077 / OG1RF).